The following is a 260-amino-acid chain: DNA repair protein RecO (260 aa).

This sequence belongs to the RecO family.

Involved in DNA repair and RecF pathway recombination. The sequence is that of DNA repair protein RecO from Desulfosudis oleivorans (strain DSM 6200 / JCM 39069 / Hxd3) (Desulfococcus oleovorans).